A 309-amino-acid chain; its full sequence is Taste receptor type 2 member 20 (309 aa).

The Extracellular segment spans residues Met1–His6. A helical membrane pass occupies residues Ile7 to Ile27. Topologically, residues Ala28 to Gln46 are cytoplasmic. The chain crosses the membrane as a helical span at residues Ile47–Tyr67. The Extracellular portion of the chain corresponds to Ser68–Lys79. A helical transmembrane segment spans residues Val80 to Thr100. The Cytoplasmic portion of the chain corresponds to Ser101–Ala125. Residues Lys126–Met146 traverse the membrane as a helical segment. Over Lys147–Thr178 the chain is Extracellular. A helical membrane pass occupies residues Val179–Ile199. Residues Tyr200–Gln229 are Cytoplasmic-facing. A helical membrane pass occupies residues Thr230 to Trp250. Residues Asn251–Ile259 lie on the Extracellular side of the membrane. The helical transmembrane segment at Val260–Ile280 threads the bilayer. Residues Trp281–Pro309 are Cytoplasmic-facing.

The protein belongs to the G-protein coupled receptor T2R family.

Its subcellular location is the membrane. Functionally, receptor that may play a role in the perception of bitterness and is gustducin-linked. May play a role in sensing the chemical composition of the gastrointestinal content. The activity of this receptor may stimulate alpha gustducin, mediate PLC-beta-2 activation and lead to the gating of TRPM5. This Pan troglodytes (Chimpanzee) protein is Taste receptor type 2 member 20 (TAS2R20).